The chain runs to 874 residues: Alanine--tRNA ligase (874 aa).

Residues H564, H568, C665, and H669 each contribute to the Zn(2+) site.

The protein belongs to the class-II aminoacyl-tRNA synthetase family. Zn(2+) serves as cofactor.

Its subcellular location is the cytoplasm. The enzyme catalyses tRNA(Ala) + L-alanine + ATP = L-alanyl-tRNA(Ala) + AMP + diphosphate. Catalyzes the attachment of alanine to tRNA(Ala) in a two-step reaction: alanine is first activated by ATP to form Ala-AMP and then transferred to the acceptor end of tRNA(Ala). Also edits incorrectly charged Ser-tRNA(Ala) and Gly-tRNA(Ala) via its editing domain. This Paraburkholderia phymatum (strain DSM 17167 / CIP 108236 / LMG 21445 / STM815) (Burkholderia phymatum) protein is Alanine--tRNA ligase.